A 198-amino-acid polypeptide reads, in one-letter code: Pyridoxal 5'-phosphate synthase subunit PdxT (198 aa).

49–51 (GES) is a binding site for L-glutamine. C81 acts as the Nucleophile in catalysis. Residues R113 and 141 to 142 (IR) contribute to the L-glutamine site. Catalysis depends on charge relay system residues H177 and E179.

It belongs to the glutaminase PdxT/SNO family. In the presence of PdxS, forms a dodecamer of heterodimers. Only shows activity in the heterodimer.

The enzyme catalyses aldehydo-D-ribose 5-phosphate + D-glyceraldehyde 3-phosphate + L-glutamine = pyridoxal 5'-phosphate + L-glutamate + phosphate + 3 H2O + H(+). It carries out the reaction L-glutamine + H2O = L-glutamate + NH4(+). It participates in cofactor biosynthesis; pyridoxal 5'-phosphate biosynthesis. In terms of biological role, catalyzes the hydrolysis of glutamine to glutamate and ammonia as part of the biosynthesis of pyridoxal 5'-phosphate. The resulting ammonia molecule is channeled to the active site of PdxS. This chain is Pyridoxal 5'-phosphate synthase subunit PdxT, found in Mycobacterium tuberculosis (strain ATCC 25177 / H37Ra).